The chain runs to 715 residues: 1,4-alpha-glucan branching enzyme GlgB (715 aa).

Asp396 functions as the Nucleophile in the catalytic mechanism. Glu449 (proton donor) is an active-site residue.

It belongs to the glycosyl hydrolase 13 family. GlgB subfamily. In terms of assembly, monomer.

It carries out the reaction Transfers a segment of a (1-&gt;4)-alpha-D-glucan chain to a primary hydroxy group in a similar glucan chain.. It participates in glycan biosynthesis; glycogen biosynthesis. In terms of biological role, catalyzes the formation of the alpha-1,6-glucosidic linkages in glycogen by scission of a 1,4-alpha-linked oligosaccharide from growing alpha-1,4-glucan chains and the subsequent attachment of the oligosaccharide to the alpha-1,6 position. In Vibrio vulnificus (strain CMCP6), this protein is 1,4-alpha-glucan branching enzyme GlgB.